The sequence spans 454 residues: Mannosylfructose-phosphate synthase (454 aa).

It belongs to the glycosyltransferase 1 family. The cofactor is Mg(2+). Mn(2+) serves as cofactor.

It carries out the reaction beta-D-fructose 6-phosphate + GDP-alpha-D-mannose = beta-D-fructofuranosyl alpha-D-mannopyranoside 6(F)-phosphate + GDP + H(+). Its pathway is carbohydrate metabolism; mannosylfructose biosynthesis; beta-D-fructofuranosyl alpha-D-mannopyranoside from D-fructose 6-phosphate and GDP-alpha-D-mannose: step 1/2. This is Mannosylfructose-phosphate synthase from Agrobacterium fabrum (strain C58 / ATCC 33970) (Agrobacterium tumefaciens (strain C58)).